A 604-amino-acid polypeptide reads, in one-letter code: Ribosome-inactivating protein PMRIPm (604 aa).

The signal sequence occupies residues 1 to 43 (MRVVAAILYINVVVALICGLGIQGGALDLQDYPSVSFQGDAMQ). Glu211 is a catalytic residue. 3 disulfide bridges follow: Cys301–Cys332, Cys348–Cys367, and Cys392–Cys409. 2 consecutive Ricin B-type lectin domains span residues 335 to 463 (GEPT…WRVG) and 466 to 598 (VEPI…WLTV). The 1-alpha repeat unit spans residues 345-387 (AGWCVDVKDGRDNDGNPIQVLSCGDGQERKQQWTFHRDGTIRS). The 1-beta repeat unit spans residues 389–429 (LGKCMTAYGFKHGEYVMIYDCDTAIAGANKWVVSIDGTITN). One copy of the 1-gamma repeat lies at 432–465 (SGLVLTAPRGATGTTLLVEKNVHAARQCWRVGDD). One copy of the 2-alpha repeat lies at 477 to 521 (QEKCLEANYLENTNVSRYTKVFLDDCVLDRQQQRWALYSDGTIRA). Residues Cys480 and Cys502 are joined by a disulfide bond. A glycan (N-linked (GlcNAc...) asparagine) is linked at Asn490. One copy of the 2-beta repeat lies at 525-563 (RSLRVTADGHRSLDSIIILACKGWGNQRWVFNTDGTILN). The 2-gamma repeat unit spans residues 566–599 (AKLVMDVKDSDVSLLQIILHQSTGKPNQKWLTVT).

Belongs to the ribosome-inactivating protein family. Type 2 RIP subfamily. Disulfide-linked dimer of A and B chains. The precursor is processed in two chains, A and B, that are linked by a disulfide bond. In terms of processing, glycosylated. Post-translationally, the N-terminus is blocked. In terms of tissue distribution, expressed in rhizome and abundantly in leaves (at protein level).

It catalyses the reaction Endohydrolysis of the N-glycosidic bond at one specific adenosine on the 28S rRNA.. Its activity is regulated as follows. Strongly inhibited by asialofetuin and asialomucin. Functionally, gal/GalNAc-specific agglutinin. Behaves as a type-2 ribosome-inactivating protein. Inhibits mammalian ribosomes. The A chain is responsible for inhibiting protein synthesis through the catalytic inactivation of 60S ribosomal subunits by removing adenine from position 4,324 of 28S rRNA. The B chain binds to cell receptors and probably facilitates the entry into the cell of the A chain; B chains are also responsible for cell agglutination (lectin activity). Involved in plant defense against insects. Has very low cytotoxic activity against the human tumor cell line Molt4, but higher against CEM. This Polygonatum multiflorum (Solomon's seal) protein is Ribosome-inactivating protein PMRIPm.